Reading from the N-terminus, the 347-residue chain is 5-formaminoimidazole-4-carboxamide-1-(beta)-D-ribofuranosyl 5'-monophosphate synthetase (347 aa).

His23 and Ser91 together coordinate 5-amino-1-(5-phospho-beta-D-ribosyl)imidazole-4-carboxamide. The ATP-grasp domain maps to 112 to 323 (RKILLWESDQ…YSYLYWDEPM (212 aa)). Residues 142–196 (PDEV…VPAY) and Glu218 each bind ATP. Residue Asn244 participates in 5-amino-1-(5-phospho-beta-D-ribosyl)imidazole-4-carboxamide binding. Glu283 and Glu296 together coordinate Mg(2+).

Belongs to the phosphohexose mutase family. Requires Mg(2+) as cofactor. It depends on Mn(2+) as a cofactor.

It catalyses the reaction 5-amino-1-(5-phospho-beta-D-ribosyl)imidazole-4-carboxamide + formate + ATP = 5-formamido-1-(5-phospho-D-ribosyl)imidazole-4-carboxamide + ADP + phosphate. It functions in the pathway purine metabolism; IMP biosynthesis via de novo pathway; 5-formamido-1-(5-phospho-D-ribosyl)imidazole-4-carboxamide from 5-amino-1-(5-phospho-D-ribosyl)imidazole-4-carboxamide (formate route): step 1/1. In terms of biological role, catalyzes the ATP- and formate-dependent formylation of 5-aminoimidazole-4-carboxamide-1-beta-d-ribofuranosyl 5'-monophosphate (AICAR) to 5-formaminoimidazole-4-carboxamide-1-beta-d-ribofuranosyl 5'-monophosphate (FAICAR) in the absence of folates. The protein is 5-formaminoimidazole-4-carboxamide-1-(beta)-D-ribofuranosyl 5'-monophosphate synthetase of Ignicoccus hospitalis (strain KIN4/I / DSM 18386 / JCM 14125).